The following is a 149-amino-acid chain: Large ribosomal subunit protein bL9 (149 aa).

The protein belongs to the bacterial ribosomal protein bL9 family.

Functionally, binds to the 23S rRNA. This Mycoplasma pneumoniae (strain ATCC 29342 / M129 / Subtype 1) (Mycoplasmoides pneumoniae) protein is Large ribosomal subunit protein bL9.